Here is a 239-residue protein sequence, read N- to C-terminus: Eukaryotic translation initiation factor 6 (239 aa).

This sequence belongs to the eIF-6 family. Monomer. Associates with the 60S ribosomal subunit.

It is found in the cytoplasm. It localises to the nucleus. The protein localises to the nucleolus. Binds to the 60S ribosomal subunit and prevents its association with the 40S ribosomal subunit to form the 80S initiation complex in the cytoplasm. May also be involved in ribosome biogenesis. The sequence is that of Eukaryotic translation initiation factor 6 from Entamoeba dispar (strain ATCC PRA-260 / SAW760).